A 647-amino-acid chain; its full sequence is DNA mismatch repair protein MutL (647 aa).

The interval 346–378 is disordered; that stretch reads QTVHAPRSAAPRVSERASDEPPAWQPSPTSGEP.

The protein belongs to the DNA mismatch repair MutL/HexB family.

In terms of biological role, this protein is involved in the repair of mismatches in DNA. It is required for dam-dependent methyl-directed DNA mismatch repair. May act as a 'molecular matchmaker', a protein that promotes the formation of a stable complex between two or more DNA-binding proteins in an ATP-dependent manner without itself being part of a final effector complex. This Limosilactobacillus fermentum (strain NBRC 3956 / LMG 18251) (Lactobacillus fermentum) protein is DNA mismatch repair protein MutL.